Reading from the N-terminus, the 922-residue chain is Pertactin autotransporter (922 aa).

Positions 1-34 are cleaved as a signal peptide; it reads MNMSLSRIVKAAPLRRTTLAMALGALGAAPAAYA. Positions 260 to 262 match the Cell attachment site; involved in adhesion to various eukaryotic cell lines motif; it reads RGD. 3 consecutive repeat copies span residues 266–270, 271–275, and 276–280. Positions 266–290 are 4 X 5 AA tandem repeats of G-G-A-V-P; that stretch reads GGAVPGGAVPGGAVPGGFGPLLDGW. The stretch at 281-285 is one 4; approximate repeat; the sequence is GGFGP. A disordered region spans residues 561 to 619; that stretch reads SLVGAKAPPAPKPAPQPGPQPGPQPPQPPQPPQPPQPPQPPQRQPEAPAPQPPAGRELS. The segment covering 568–613 has biased composition (pro residues); sequence PPAPKPAPQPGPQPGPQPPQPPQPPQPPQPPQPPQRQPEAPAPQPP. The segment at 575–603 is 9 X 3 AA approximate repeats of P-Q-P; sequence PQPGPQPGPQPPQPPQPPQPPQPPQPPQR. One can recognise an Autotransporter domain in the interval 654-922; it reads LNPDAGGAWG…TFHAGYRYSW (269 aa).

In terms of assembly, monomer.

Its subcellular location is the periplasm. It is found in the secreted. It localises to the cell surface. The protein localises to the cell outer membrane. Agglutinogen that binds to eukaryotic cells; a process mediated by the R-G-D sequence. Pertactin may have a role in bacterial adhesion, and thus play a role in virulence. May contribute to the disease state of whooping cough. The protein is Pertactin autotransporter (prn) of Bordetella parapertussis (strain 12822 / ATCC BAA-587 / NCTC 13253).